A 406-amino-acid chain; its full sequence is MQKKRIWTNARLATMAAGLPGLGIVEDGLIAAEGDRITFAGLASDFPYTEGPSTQGYEVTDCGGRWILPGLIDCHTHLVWAGSRADEFERRLAGASYEEIARSGGGIRSTVSAVRAASEAELVAESLPRLNALIGEGVTTIEIKSGYGLNIEDELKQLRAARALGEVRPIDVETTLLAAHTLPPEYEGRADAYIDLVCNEIIPAAAQAGLASAVDAFCETIGFTPEQTGRVLSAARHHGLAVKLHADQLSNLQGGALAARHNALSADHLEYLDEAGIAAMAQAGMVAVMLPGAYYVLRETHPPPLEGLRRAGVSLAISTDCNPGTSPLTSILLAMNMGATLFRMTVEECLLGTTRHAARALGLEKATGTLEAGKLCNLSIWDIDRPAELVNAMGLNPLHTRVWRGQ.

Histidine 75 and histidine 77 together coordinate Fe(3+). Zn(2+) is bound by residues histidine 75 and histidine 77. Residues arginine 84, tyrosine 147, and histidine 180 each coordinate 4-imidazolone-5-propanoate. Tyrosine 147 is an N-formimidoyl-L-glutamate binding site. A Fe(3+)-binding site is contributed by histidine 245. Histidine 245 is a Zn(2+) binding site. Glutamine 248 is a 4-imidazolone-5-propanoate binding site. Residue aspartate 320 participates in Fe(3+) binding. Aspartate 320 provides a ligand contact to Zn(2+). The N-formimidoyl-L-glutamate site is built by asparagine 322 and glycine 324. Position 325 (threonine 325) interacts with 4-imidazolone-5-propanoate.

It belongs to the metallo-dependent hydrolases superfamily. HutI family. Zn(2+) is required as a cofactor. Fe(3+) serves as cofactor.

Its subcellular location is the cytoplasm. It catalyses the reaction 4-imidazolone-5-propanoate + H2O = N-formimidoyl-L-glutamate. Its pathway is amino-acid degradation; L-histidine degradation into L-glutamate; N-formimidoyl-L-glutamate from L-histidine: step 3/3. In terms of biological role, catalyzes the hydrolytic cleavage of the carbon-nitrogen bond in imidazolone-5-propanoate to yield N-formimidoyl-L-glutamate. It is the third step in the universal histidine degradation pathway. This is Imidazolonepropionase from Hyphomonas neptunium (strain ATCC 15444).